The chain runs to 33 residues: MNIDILSQLIAIAVTLFLGPVVVILIASRNGNL.

Residues 5-25 traverse the membrane as a helical segment; that stretch reads ILSQLIAIAVTLFLGPVVVIL.

This sequence belongs to the Psb30/Ycf12 family. In terms of assembly, PSII is composed of 1 copy each of membrane proteins PsbA, PsbB, PsbC, PsbD, PsbE, PsbF, PsbH, PsbI, PsbJ, PsbK, PsbL, PsbM, PsbT, PsbX, PsbY, PsbZ, Psb30/Ycf12, peripheral proteins of the oxygen-evolving complex and a large number of cofactors. It forms dimeric complexes.

The protein resides in the plastid. It localises to the chloroplast thylakoid membrane. Functionally, a core subunit of photosystem II (PSII), probably helps stabilize the reaction center. The protein is Photosystem II reaction center protein Psb30 of Oedogonium cardiacum (Filamentous green alga).